The primary structure comprises 1233 residues: MGFLKLIEIENFKSYKGRQIIGPFQRFTAIIGPNGSGKSNLMDAISFVLGEKTSNLRVKTLRDLIHGAPVGKPAANRAFVSMVYSEEGAEDRTFARVIVGGSSEYKINNKVVQLHEYSEELEKLGILIKARNFLVFQGAVESIAMKNPKERTALFEEISRSGELAQEYDKRKKEMVKAEEDTQFNYHRKKNIAAERKEAKQEKEEADRYQRLKDEVVRAQVQLQLFKLYHNEVEIEKLNKELASKNKEIEKDKKRMDKVEDELKEKKKELGKMMREQQQIEKEIKEKDSELNQKRPQYIKAKENTSHKIKKLEAAKKSLQNAQKHYKKRKGDMDELEKEMLSVEKARQEFEERMEEESQSQGRDLTLEENQVKKYHRLKEEASKRAATLAQELEKFNRDQKADQDRLDLEERKKVETEAKIKQKLREIEENQKRIEKLEEYITTSKQSLEEQKKLEGELTEEVEMAKRRIDEINKELNQVMEQLGDARIDRQESSRQQRKAEIMESIKRLYPGSVYGRLIDLCQPTQKKYQIAVTKVLGKNMDAIIVDSEKTGRDCIQYIKEQRGEPETFLPLDYLEVKPTDEKLRELKGAKLVIDVIRYEPPHIKKALQYACGNALVCDNVEDARRIAFGGHQRHKTVALDGTLFQKSGVISGGASDLKAKARRWDEKAVDKLKEKKERLTEELKEQMKAKRKEAELRQVQSQAHGLQMRLKYSQSDLEQTKTRHLALNLQEKSKLESELANFGPRINDIKRIIQSREREMKDLKEKMNQVEDEVFEEFCREIGVRNIREFEEEKVKRQNEIAKKRLEFENQKTRLGIQLDFEKNQLKEDQDKVHMWEQTVKKDENEIEKLKKEEQRHMKIIDETMAQLQDLKNQHLAKKSEVNDKNHEMEEIRKKLGGANKEMTHLQKEVTAIETKLEQKRSDRHNLLQACKMQDIKLPLSKGTMDDISQEEGSSQGEDSVSGSQRTSNIYAREALIEIDYGDLCEDLKDAQAEEEIKQEMNTLQQKLNEQQSVLQRIAAPNMKAMEKLESVRDKFQETSDEFEAARKRAKKAKQAFEQIKKERFDRFNACFESVATNIDEIYKALSRNSSAQAFLGPENPEEPYLDGINYNCVAPGKRFRPMDNLSGGEKTVAALALLFAIHSYKPAPFFVLDEIDAALDNTNIGKVANYIKEQSTCNFQAIVISLKEEFYTKAESLIGVYPEQGDCVISKVLTFDLTKYPDANPNPNEQ.

Residue G32–S39 participates in ATP binding. 2 coiled-coil regions span residues E104 to L124 and E163 to I503. Basic and acidic residues predominate over residues I284–Q293. Disordered regions lie at residues I284–K308 and Q348–E369. Phosphoserine occurs at positions 358 and 360. An SMC hinge domain is found at V515–A629. 2 positions are modified to N6-acetyllysine: K648 and K713. The stretch at K660 to M935 forms a coiled coil. Positions M947–R968 are disordered. Residues E953 to Q967 are compositionally biased toward low complexity. 4 positions are modified to phosphoserine: S957, S962, S966, and S970. The stretch at K991–D1068 forms a coiled coil. At K1037 the chain carries N6-acetyllysine.

This sequence belongs to the SMC family. SMC1 subfamily. As to quaternary structure, forms a heterodimer with SMC3 in cohesin complexes. Cohesin complexes are composed of the SMC1 (SMC1A or meiosis-specific SMC1B) and SMC3 heterodimer attached via their SMC hinge domain, RAD21 which link them, and one STAG protein (STAG1, STAG2 or meiosis-specific STAG3), which interacts with RAD21. In germ cell cohesin complexes, SMC1A is mutually exclusive with SMC1B. Found in a complex with CDCA5, SMC3 and RAD21, PDS5A/SCC-112 and PDS5B/APRIN. Interacts with NDC80, SYCP2, STAG3, BRCA1 and BRAT1. The cohesin complex interacts with the cohesin loading complex subunits NIPBL/Scc2 (via HEAT repeats) and MAU2/Scc4. NIPBL directly contacts all members of the complex, RAD21, SMC1A/B, SMC3 and STAG1. Interacts with RPGR. Found in a complex containing POLE and SMC3. Phosphorylated upon ionizing radiation or DNA methylation. Phosphorylation of Ser-957 and Ser-966 activates it and is required for S-phase checkpoint activation. In terms of processing, ubiquitinated by the DCX(DCAF15) complex, leading to its degradation.

The protein resides in the nucleus. The protein localises to the chromosome. Its subcellular location is the centromere. Involved in chromosome cohesion during cell cycle and in DNA repair. Involved in DNA repair via its interaction with BRCA1 and its related phosphorylation by ATM, and works as a downstream effector in the ATM/NBS1 branch of S-phase checkpoint. Central component of cohesin complex. The cohesin complex is required for the cohesion of sister chromatids after DNA replication. The cohesin complex apparently forms a large proteinaceous ring within which sister chromatids can be trapped. At anaphase, the complex is cleaved and dissociates from chromatin, allowing sister chromatids to segregate. The cohesin complex may also play a role in spindle pole assembly during mitosis. Involved in DNA repair via its interaction with BRCA1 and its related phosphorylation by ATM, or via its phosphorylation by ATR. Works as a downstream effector both in the ATM/NBS1 branch and in the ATR/MSH2 branch of S-phase checkpoint. This chain is Structural maintenance of chromosomes protein 1A (SMC1A), found in Bos taurus (Bovine).